The sequence spans 158 residues: MRCPSCGSLDTQVKDSRPTEDSSVIRRRRVCLTCNFRFTTFERVQLRELTVIKRNGRRVPFDRDKLVRSLQISLRKRPVETERLEKMVSTIVRELESSGEAEISSEMIGEIVMENLRQLDDVAYVRFASVYRNFREAKDFETVLGELSDEGLPTNVRK.

Residues 1–20 (MRCPSCGSLDTQVKDSRPTE) are disordered. A zinc finger spans residues 3-34 (CPSCGSLDTQVKDSRPTEDSSVIRRRRVCLTC). The ATP-cone domain occupies 49-139 (LTVIKRNGRR…VYRNFREAKD (91 aa)).

This sequence belongs to the NrdR family. Zn(2+) is required as a cofactor.

Functionally, negatively regulates transcription of bacterial ribonucleotide reductase nrd genes and operons by binding to NrdR-boxes. This is Transcriptional repressor NrdR from Afipia carboxidovorans (strain ATCC 49405 / DSM 1227 / KCTC 32145 / OM5) (Oligotropha carboxidovorans).